A 157-amino-acid polypeptide reads, in one-letter code: S-ribosylhomocysteine lyase (157 aa).

Positions 53, 57, and 124 each coordinate Fe cation.

It belongs to the LuxS family. In terms of assembly, homodimer. Fe cation is required as a cofactor.

The enzyme catalyses S-(5-deoxy-D-ribos-5-yl)-L-homocysteine = (S)-4,5-dihydroxypentane-2,3-dione + L-homocysteine. Involved in the synthesis of autoinducer 2 (AI-2) which is secreted by bacteria and is used to communicate both the cell density and the metabolic potential of the environment. The regulation of gene expression in response to changes in cell density is called quorum sensing. Catalyzes the transformation of S-ribosylhomocysteine (RHC) to homocysteine (HC) and 4,5-dihydroxy-2,3-pentadione (DPD). In Borrelia garinii subsp. bavariensis (strain ATCC BAA-2496 / DSM 23469 / PBi) (Borreliella bavariensis), this protein is S-ribosylhomocysteine lyase.